A 248-amino-acid chain; its full sequence is Myelin protein P0 (248 aa).

The signal sequence occupies residues 1–29 (MAPGAPSSSPSPILAVLLFSSLVLSPAQA). In terms of domain architecture, Ig-like V-type spans 30–143 (IVVYTDREVH…DIVGKTSQVT (114 aa)). Over 30 to 153 (IVVYTDREVH…LYVFEKVPTR (124 aa)) the chain is Extracellular. A disulfide bond links C50 and C127. N122 carries an N-linked (GlcNAc...) (complex) asparagine glycan. A helical transmembrane segment spans residues 154 to 179 (YGVVLGAVIGGVLGVVLLLLLLFYVV). Topologically, residues 180-248 (RYCWLRRQAA…GLGESRKDKK (69 aa)) are cytoplasmic. S210 is subject to Phosphoserine; by PKC. The segment at 224–248 (DHSRSTKAVSEKKAKGLGESRKDKK) is disordered. Residues S226 and S228 each carry the phosphoserine modification. Phosphoserine; by PKC is present on residues S233 and S243.

Belongs to the myelin P0 protein family. As to quaternary structure, homodimer and homotetramer. In terms of processing, N-glycosylated; contains sulfate-substituted glycan. As to expression, found only in peripheral nervous system Schwann cells.

Its subcellular location is the cell membrane. The protein localises to the myelin membrane. Functionally, is an adhesion molecule necessary for normal myelination in the peripheral nervous system. It mediates adhesion between adjacent myelin wraps and ultimately drives myelin compaction. In Homo sapiens (Human), this protein is Myelin protein P0 (MPZ).